The following is a 347-amino-acid chain: NADH-ubiquinone oxidoreductase chain 2 (347 aa).

Helical transmembrane passes span 3 to 23 (PMILLMLLITILSGTSIVMMS), 25 to 45 (HWFLTWLGFEMNMMAMIPVLM), 59 to 79 (YFLTQATASMILVLGIIINLI), 96 to 116 (TLLTIALVMKLGLAPFHFWVP), 122 to 142 (VSLNSGLILLTWQKIAPLSLL), 149 to 169 (VNTNILLVMSLLSIMVGGWGG), 178 to 198 (IMAYSSIAHMGWMIMIMIYNP), 201 to 221 (SLLNLLIYILMTSSMFMLLMF), 239 to 259 (IITTTILIILLSLGGLPPLSG), 274 to 294 (DSVILPAVMAILALLNLFFYM), and 326 to 346 (MTSLISISIMALPLTPLAMIL).

This sequence belongs to the complex I subunit 2 family. In terms of assembly, core subunit of respiratory chain NADH dehydrogenase (Complex I) which is composed of 45 different subunits. Interacts with TMEM242.

It is found in the mitochondrion inner membrane. It catalyses the reaction a ubiquinone + NADH + 5 H(+)(in) = a ubiquinol + NAD(+) + 4 H(+)(out). Core subunit of the mitochondrial membrane respiratory chain NADH dehydrogenase (Complex I) which catalyzes electron transfer from NADH through the respiratory chain, using ubiquinone as an electron acceptor. Essential for the catalytic activity and assembly of complex I. The chain is NADH-ubiquinone oxidoreductase chain 2 from Sylvisorex johnstoni (Johnston's forest shrew).